The sequence spans 240 residues: UDP-2,3-diacylglucosamine hydrolase (240 aa).

Residues aspartate 8, histidine 10, aspartate 41, asparagine 79, and histidine 114 each coordinate Mn(2+). 79–80 provides a ligand contact to substrate; sequence NR. 5 residues coordinate substrate: aspartate 122, serine 160, asparagine 164, lysine 167, and histidine 195. Mn(2+) contacts are provided by histidine 195 and histidine 197.

It belongs to the LpxH family. Requires Mn(2+) as cofactor.

It is found in the cell inner membrane. The enzyme catalyses UDP-2-N,3-O-bis[(3R)-3-hydroxytetradecanoyl]-alpha-D-glucosamine + H2O = 2-N,3-O-bis[(3R)-3-hydroxytetradecanoyl]-alpha-D-glucosaminyl 1-phosphate + UMP + 2 H(+). Its pathway is glycolipid biosynthesis; lipid IV(A) biosynthesis; lipid IV(A) from (3R)-3-hydroxytetradecanoyl-[acyl-carrier-protein] and UDP-N-acetyl-alpha-D-glucosamine: step 4/6. In terms of biological role, hydrolyzes the pyrophosphate bond of UDP-2,3-diacylglucosamine to yield 2,3-diacylglucosamine 1-phosphate (lipid X) and UMP by catalyzing the attack of water at the alpha-P atom. Involved in the biosynthesis of lipid A, a phosphorylated glycolipid that anchors the lipopolysaccharide to the outer membrane of the cell. The polypeptide is UDP-2,3-diacylglucosamine hydrolase (Escherichia coli O127:H6 (strain E2348/69 / EPEC)).